A 383-amino-acid chain; its full sequence is Queuine tRNA-ribosyltransferase (383 aa).

The Proton acceptor role is filled by Asp90. Residues Asp90–Phe94, Asp144, Gln193, and Gly227 each bind substrate. The tract at residues Gly258–Asp264 is RNA binding. The active-site Nucleophile is Asp277. The RNA binding; important for wobble base 34 recognition stretch occupies residues Thr282–Arg286. Residues Cys315, Cys317, Cys320, and His346 each coordinate Zn(2+).

Belongs to the queuine tRNA-ribosyltransferase family. In terms of assembly, homodimer. Within each dimer, one monomer is responsible for RNA recognition and catalysis, while the other monomer binds to the replacement base PreQ1. The cofactor is Zn(2+).

The catalysed reaction is 7-aminomethyl-7-carbaguanine + guanosine(34) in tRNA = 7-aminomethyl-7-carbaguanosine(34) in tRNA + guanine. The protein operates within tRNA modification; tRNA-queuosine biosynthesis. In terms of biological role, catalyzes the base-exchange of a guanine (G) residue with the queuine precursor 7-aminomethyl-7-deazaguanine (PreQ1) at position 34 (anticodon wobble position) in tRNAs with GU(N) anticodons (tRNA-Asp, -Asn, -His and -Tyr). Catalysis occurs through a double-displacement mechanism. The nucleophile active site attacks the C1' of nucleotide 34 to detach the guanine base from the RNA, forming a covalent enzyme-RNA intermediate. The proton acceptor active site deprotonates the incoming PreQ1, allowing a nucleophilic attack on the C1' of the ribose to form the product. After dissociation, two additional enzymatic reactions on the tRNA convert PreQ1 to queuine (Q), resulting in the hypermodified nucleoside queuosine (7-(((4,5-cis-dihydroxy-2-cyclopenten-1-yl)amino)methyl)-7-deazaguanosine). This chain is Queuine tRNA-ribosyltransferase, found in Ralstonia pickettii (strain 12J).